The following is a 247-amino-acid chain: tRNA pseudouridine synthase A (247 aa).

D52 functions as the Nucleophile in the catalytic mechanism. Position 111 (Y111) interacts with substrate.

Belongs to the tRNA pseudouridine synthase TruA family. As to quaternary structure, homodimer.

It catalyses the reaction uridine(38/39/40) in tRNA = pseudouridine(38/39/40) in tRNA. Formation of pseudouridine at positions 38, 39 and 40 in the anticodon stem and loop of transfer RNAs. This Caulobacter vibrioides (strain ATCC 19089 / CIP 103742 / CB 15) (Caulobacter crescentus) protein is tRNA pseudouridine synthase A.